Here is a 551-residue protein sequence, read N- to C-terminus: Arginine--tRNA ligase (551 aa).

A 'HIGH' region motif is present at residues 123-133 (ANPTGPLTIGR).

This sequence belongs to the class-I aminoacyl-tRNA synthetase family. Monomer.

It localises to the cytoplasm. It catalyses the reaction tRNA(Arg) + L-arginine + ATP = L-arginyl-tRNA(Arg) + AMP + diphosphate. The sequence is that of Arginine--tRNA ligase from Chlorobaculum parvum (strain DSM 263 / NCIMB 8327) (Chlorobium vibrioforme subsp. thiosulfatophilum).